The sequence spans 1714 residues: MAQFPTPFGGSLDVWAITVEERAKHDQQFLSLKPIAGFITGDQARNFFFQSGLPQPVLAQIWALADMNNDGRMDQVEFSIAMKLIKLKLQGYQLPSTLPPVMKQQPVAISSAPAFGIGGIASMPPLTAVAPVPMGSIPVVGMSPPLVSSVPPAAVPPLANGAPPVIQPLPAFAHPAATLPKSSSFSRSGPGSQLNTKLQKAQSFDVASAPPAAEWAVPQSSRLKYRQLFNSHDKTMSGHLTGPQARTILMQSSLPQAQLASIWNLSDIDQDGKLTAEEFILAMHLIDVAMSGQPLPPVLPPEYIPPSFRRVRSGSGMSVISSSSVDQRLPEEPSSEDEQQPEKKLPVTFEDKKRENFERGSVELEKRRQALLEQQRKEQERLAQLERAEQERKERERQEQERKRQLELEKQLEKQRELERQREEERRKEIERREAAKRELERQRQLEWERNRRQELLNQRNKEQEGTVVLKARRKTLEFELEALNDKKHQLEGKLQDIRCRLATQRQEIESTNKSRELRIAEITHLQQQLQESQQMLGRLIPEKQILSDQLKQVQQNSLHRDSLLTLKRALEAKELARQQLREQLDEVERETRSKLQEIDVFNNQLKELREIHSKQQLQKQRSLEAARLKQKEQERKSLELEKQKEDAQRRVQERDKQWLEHVQQEEQPRPRKPHEEDRLKREDSVRKKEAEERAKPEMQDKQSRLFHPHQEPAKLATQAPWSTTEKGPLTISAQESVKVVYYRALYPFESRSHDEITIQPGDIVMVDESQTGEPGWLGGELKGKTGWFPANYAEKIPENEVPTPAKPVTDLTSAPAPKLALRETPAPLPVTSSEPSTTPNNWADFSSTWPSSSNEKPETDNWDTWAAQPSLTVPSAGQLRQRSAFTPATATGSSPSPVLGQGEKVEGLQAQALYPWRAKKDNHLNFNKSDVITVLEQQDMWWFGEVQGQKGWFPKSYVKLISGPVRKSTSIDTGPTESPASLKRVASPAAKPAIPGEEFIAMYTYESSEQGDLTFQQGDVIVVTKKDGDWWTGTVGDKSGVFPSNYVRLKDSEGSGTAGKTGSLGKKPEIAQVIASYAATGPEQLTLAPGQLILIRKKNPGGWWEGELQARGKKRQIGWFPANYVKLLSPGTSKITPTELPKTAVQPAVCQVIGMYDYTAQNDDELAFSKGQIINVLNKEDPDWWKGEVSGQVGLFPSNYVKLTTDMDPSQQWCSDLHLLDMLTPTERKRQGYIHELIVTEENYVNDLQLVTEIFQKPLTESELLTEKEVAMIFVNWKELIMCNIKLLKALRVRKKMSGEKMPVKMIGDILSAQLPHMQPYIRFCSCQLNGAALIQQKTDEAPDFKEFVKRLAMDPRCKGMPLSSFILKPMQRVTRYPLIIKNILENTPENHPDHSHLKHALEKAEELCSQVNEGVREKENSDRLEWIQAHVQCEGLSEQLVFNSVTNCLGPRKFLHSGKLYKAKSNKELYGFLFNDFLLLTQITKPLGSSGTDKVFSPKSNLQYKMYKTPIFLNEVLVKLPTDPSGDEPIFHISHIDRVYTLRAESINERTAWVQKIKAASELYIETEKKKREKAYLVRSQRATGIGRLMVNVVEGIELKPCRSHGKSNPYCEVTMGSQCHITKTIQDTLNPKWNSNCQFFIRDLEQEVLCITVFERDQFSPDDFLGRTEIRVADIKKDQGSKGPVTKCLLLHEVPTGEIVVRLDLQLFDEP.

An EH 1 domain is found at 21–109 (ERAKHDQQFL…PVMKQQPVAI (89 aa)). The EF-hand 1 domain maps to 53–88 (LPQPVLAQIWALADMNNDGRMDQVEFSIAMKLIKLK). Residues D66, N68, D70, R72, and E77 each coordinate Ca(2+). S203 bears the Phosphoserine mark. One can recognise an EH 2 domain in the interval 221–310 (SRLKYRQLFN…PEYIPPSFRR (90 aa)). In terms of domain architecture, EF-hand 2 spans 254–289 (LPQAQLASIWNLSDIDQDGKLTAEEFILAMHLIDVA). Ca(2+)-binding residues include D267, D269, D271, K273, and E278. The span at 310–325 (RVRSGSGMSVISSSSV) shows a compositional bias: low complexity. 2 disordered regions span residues 310–356 (RVRS…KREN) and 614–706 (SKQQ…QSRL). A phosphoserine mark is found at S318, S334, and S335. Residues 326-702 (DQRLPEEPSS…ERAKPEMQDK (377 aa)) form a KLERQ region. 2 stretches are compositionally biased toward basic and acidic residues: residues 340–356 (QPEK…KREN) and 622–706 (RSLE…QSRL). A coiled-coil region spans residues 354-658 (RENFERGSVE…QRRVQERDKQ (305 aa)). S685 carries the phosphoserine modification. The region spanning 738–799 (VKVVYYRALY…PANYAEKIPE (62 aa)) is the SH3 1 domain. The interval 827–863 (APLPVTSSEPSTTPNNWADFSSTWPSSSNEKPETDNW) is disordered. Over residues 831 to 855 (VTSSEPSTTPNNWADFSSTWPSSSN) the composition is skewed to polar residues. The residue at position 890 (T890) is a Phosphothreonine. A phosphoserine mark is found at S894, S895, and S897. In terms of domain architecture, SH3 2 spans 906–964 (VEGLQAQALYPWRAKKDNHLNFNKSDVITVLEQQDMWWFGEVQGQKGWFPKSYVKLISG). Phosphoserine is present on S971. T977 carries the phosphothreonine modification. Phosphoserine is present on residues S979 and S988. 2 consecutive SH3 domains span residues 995-1053 (IPGE…LKDS) and 1067-1131 (KKPE…LLSP). Residues 1067–1131 (KKPEIAQVIA…PANYVKLLSP (65 aa)) form a required for interaction with FCHSD2 region. Residues 1097–1120 (RKKNPGGWWEGELQARGKKRQIGW) carry the Bipartite nuclear localization signal; in isoform 2 motif. At S1130 the chain carries Phosphoserine. A Phosphothreonine modification is found at T1137. The region spanning 1148–1207 (PAVCQVIGMYDYTAQNDDELAFSKGQIINVLNKEDPDWWKGEVSGQVGLFPSNYVKLTTD) is the SH3 5 domain. A DH domain is found at 1230–1416 (KRQGYIHELI…EELCSQVNEG (187 aa)). Positions 1455-1564 (KFLHSGKLYK…WVQKIKAASE (110 aa)) constitute a PH domain. The C2 domain maps to 1572–1688 (KKREKAYLVR…KKDQGSKGPV (117 aa)). S1638 carries the phosphoserine modification. Ca(2+) contacts are provided by D1660, S1663, and D1666.

In terms of assembly, interacts (via DH domain) with CDC42. Interacts (via SH3 domain 1) with WASL. Interacts with dynamin, SNAP25 and SNAP23. Interacts with clathrin-associated proteins and other components of the endocytic machinery, such as SPIN90, EPS15, EPN1, EPN2, STON2, FCHO1, FCHO2 and DAB2. Interacts (via SH3 domains) with REPS1 and SGIP1. Interacts with ARHGAP31. Interacts with ADAM15. Interacts with PRRT2. Interacts (via SH3 domain 4) with FCHSD2 (via SH3 domain 2). Interacts (via SH3 domain 1) with DENND2B. Interacts (via SH3 domains) with CBL. Isoform 2: Interacts with CBL and DNM1. Isoform 2: Interacts with LMNA. Isoform 2: Interacts with importin subunit KPNA1; this is likely to mediate its import into the nucleus. Interacts with DNM2. It depends on Ca(2+) as a cofactor. As to expression, detected in brain, adrenal gland and heart. Detected in neurons at the calyx of Held (at protein level). Isoform 1: Primarily detected in brain neurons. Isoform 2: Primarily detected in glia (at protein level). Widely expressed. Expressed at high levels in brain, heart and skeletal muscle.

It is found in the endomembrane system. Its subcellular location is the synapse. The protein localises to the synaptosome. It localises to the cell projection. The protein resides in the lamellipodium. It is found in the cell membrane. Its subcellular location is the membrane. The protein localises to the clathrin-coated pit. It localises to the recycling endosome. The protein resides in the endosome. It is found in the cytoplasmic vesicle. Its subcellular location is the cytoplasm. The protein localises to the nucleus envelope. Its function is as follows. Adapter protein that provides a link between the endocytic membrane traffic and the actin assembly machinery. Acts as a guanine nucleotide exchange factor (GEF) for CDC42, and thereby stimulates actin nucleation mediated by WASL and the ARP2/3 complex. Plays a role in the assembly and maturation of clathrin-coated vesicles. Recruits FCHSD2 to clathrin-coated pits. Involved in endocytosis of activated EGFR, and probably also other growth factor receptors. Involved in endocytosis of integrin beta-1 (ITGB1) and transferrin receptor (TFR); internalization of ITGB1 as DAB2-dependent cargo but not TFR may involve association with DAB2. Promotes ubiquitination and subsequent degradation of EGFR, and thereby contributes to the down-regulation of EGFR-dependent signaling pathways. In chromaffin cells, required for normal exocytosis of catecholamines. Required for rapid replenishment of release-ready synaptic vesicles at presynaptic active zones. Inhibits ARHGAP31 activity toward RAC1. In terms of biological role, plays a role in synaptic vesicle endocytosis in brain neurons. The sequence is that of Intersectin-1 from Mus musculus (Mouse).